The chain runs to 242 residues: Probable ABC transporter ATP-binding protein PEB1C (242 aa).

One can recognise an ABC transporter domain in the interval 2 to 236 (IELKNVNKYY…PKTERARLFL (235 aa)). 34 to 41 (GPSGSGKS) contacts ATP.

This sequence belongs to the ABC transporter superfamily.

It localises to the cell inner membrane. Most probably involved, with PEB1, in a binding-protein-dependent transport system for an amino acid. Probably responsible for energy coupling to the transport system. The polypeptide is Probable ABC transporter ATP-binding protein PEB1C (peb1C) (Campylobacter jejuni subsp. jejuni serotype O:2 (strain ATCC 700819 / NCTC 11168)).